A 367-amino-acid chain; its full sequence is MSGTLARIAEIEAEMARTQKNKATAYHLGLLKARLAKLRRELITPKGGGGGGPGEGFDVAKTGDARIGFVGFPSVGKSTLLSNLAGVYSEVAAYEFTTLTTVPGVVRYKGAKIQLLDLPGIIEGAKDGKGRGRQVIAVARTCNLILIVLDVLKPLGHKKIIENELEGFGIRLNKQPPNIGFKKKDKGGINLTATCAQSELDNDTVKSILAEYKIHNADITLRSDATADDLIDVVEGNRVYIPCIYVLNKIDQISIEELDIIYKVPHCVPISAHHRWNFDDLLEKIWDYLQLVRIYTKPKGQLPDYTSPVVLPCSHTAAEDFCTKIHKNLIKEFKYALVWGSSVKHNPQKVGKDHVLEDEDVIQIVKK.

The required for interaction with STK16 stretch occupies residues 2-16 (SGTLARIAEIEAEMA). The region spanning 65-290 (ARIGFVGFPS…LLEKIWDYLQ (226 aa)) is the OBG-type G domain. GTP contacts are provided by residues 71-78 (GFPSVGKS), 96-100 (FTTLT), 117-120 (DLPG), 248-251 (NKID), and 271-273 (SAH). Mg(2+) contacts are provided by serine 78 and threonine 98. Residues 290–366 (QLVRIYTKPK…EDEDVIQIVK (77 aa)) enclose the TGS domain.

Belongs to the TRAFAC class OBG-HflX-like GTPase superfamily. OBG GTPase family. The cofactor is Mg(2+). It depends on K(+) as a cofactor. In terms of tissue distribution, expressed in many adult amd embryonic tissues. In adults, highest levels in ovaries and testes, followed by skeletal muscle, stomach, brain, kidney and liver. Weak expression in heart and brain.

The protein resides in the nucleus. Its subcellular location is the cytoplasm. It carries out the reaction GTP + H2O = GDP + phosphate + H(+). Catalyzes the conversion of GTP to GDP through hydrolysis of the gamma-phosphate bond in GTP. Binds to microtubules and promotes microtubule polymerization and bundling. GTPase activity is not necessary for these microtubule-related functions. This is Developmentally-regulated GTP-binding protein 1 (drg1) from Xenopus laevis (African clawed frog).